The sequence spans 672 residues: DNA ligase (672 aa).

Residues 35 to 39, 84 to 85, and glutamate 116 each bind NAD(+); these read DAEYD and SL. Lysine 118 serves as the catalytic N6-AMP-lysine intermediate. The NAD(+) site is built by arginine 139, glutamate 179, lysine 295, and lysine 319. Residues cysteine 413, cysteine 416, cysteine 431, and cysteine 436 each contribute to the Zn(2+) site. Residues 593-672 enclose the BRCT domain; sequence PRSAPLTGKT…EEFLRLAGKI (80 aa).

It belongs to the NAD-dependent DNA ligase family. LigA subfamily. The cofactor is Mg(2+). Requires Mn(2+) as cofactor.

The catalysed reaction is NAD(+) + (deoxyribonucleotide)n-3'-hydroxyl + 5'-phospho-(deoxyribonucleotide)m = (deoxyribonucleotide)n+m + AMP + beta-nicotinamide D-nucleotide.. Its function is as follows. DNA ligase that catalyzes the formation of phosphodiester linkages between 5'-phosphoryl and 3'-hydroxyl groups in double-stranded DNA using NAD as a coenzyme and as the energy source for the reaction. It is essential for DNA replication and repair of damaged DNA. In Syntrophus aciditrophicus (strain SB), this protein is DNA ligase.